A 302-amino-acid polypeptide reads, in one-letter code: Tyrosine recombinase XerC (302 aa).

One can recognise a Core-binding (CB) domain in the interval Gln2 to Leu89. Residues Arg110–Asp289 form the Tyr recombinase domain. Catalysis depends on residues Arg150, Lys174, His241, Arg244, and His267. Residue Tyr276 is the O-(3'-phospho-DNA)-tyrosine intermediate of the active site.

Belongs to the 'phage' integrase family. XerC subfamily. Forms a cyclic heterotetrameric complex composed of two molecules of XerC and two molecules of XerD.

It is found in the cytoplasm. Functionally, site-specific tyrosine recombinase, which acts by catalyzing the cutting and rejoining of the recombining DNA molecules. The XerC-XerD complex is essential to convert dimers of the bacterial chromosome into monomers to permit their segregation at cell division. It also contributes to the segregational stability of plasmids. The polypeptide is Tyrosine recombinase XerC (Pelobacter propionicus (strain DSM 2379 / NBRC 103807 / OttBd1)).